The primary structure comprises 309 residues: Coproporphyrin III ferrochelatase (309 aa).

Fe-coproporphyrin III contacts are provided by residues Tyr12, Arg29, 45 to 46 (RY), Ser53, and Tyr124. Fe(2+) contacts are provided by His182 and Glu263.

This sequence belongs to the ferrochelatase family.

The protein resides in the cytoplasm. It catalyses the reaction Fe-coproporphyrin III + 2 H(+) = coproporphyrin III + Fe(2+). It participates in porphyrin-containing compound metabolism; protoheme biosynthesis. In terms of biological role, involved in coproporphyrin-dependent heme b biosynthesis. Catalyzes the insertion of ferrous iron into coproporphyrin III to form Fe-coproporphyrin III. The chain is Coproporphyrin III ferrochelatase from Listeria innocua serovar 6a (strain ATCC BAA-680 / CLIP 11262).